Consider the following 351-residue polypeptide: Dihydroorotate dehydrogenase (quinone) (351 aa).

Residues 61–65 (AGLDK) and Thr85 each bind FMN. Residue Lys65 coordinates substrate. Position 110-114 (110-114 (NRMGF)) interacts with substrate. Asn139 and Asn172 together coordinate FMN. Asn172 serves as a coordination point for substrate. Residue Ser175 is the Nucleophile of the active site. Asn177 serves as a coordination point for substrate. 2 residues coordinate FMN: Lys217 and Thr245. A substrate-binding site is contributed by 246 to 247 (NT). Residues Gly268, Gly297, and 318-319 (YS) each bind FMN.

Belongs to the dihydroorotate dehydrogenase family. Type 2 subfamily. In terms of assembly, monomer. Requires FMN as cofactor.

Its subcellular location is the cell membrane. The enzyme catalyses (S)-dihydroorotate + a quinone = orotate + a quinol. Its pathway is pyrimidine metabolism; UMP biosynthesis via de novo pathway; orotate from (S)-dihydroorotate (quinone route): step 1/1. Functionally, catalyzes the conversion of dihydroorotate to orotate with quinone as electron acceptor. In Xanthomonas campestris pv. campestris (strain 8004), this protein is Dihydroorotate dehydrogenase (quinone).